Reading from the N-terminus, the 65-residue chain is Small ribosomal subunit protein bS21 (65 aa).

Belongs to the bacterial ribosomal protein bS21 family.

The chain is Small ribosomal subunit protein bS21 from Chlorobium limicola (strain DSM 245 / NBRC 103803 / 6330).